Reading from the N-terminus, the 273-residue chain is Thymidylate synthase (273 aa).

Arginine 31 serves as a coordination point for dUMP. Histidine 61 lines the (6R)-5,10-methylene-5,6,7,8-tetrahydrofolate pocket. Residue 136-137 (RR) coordinates dUMP. Cysteine 156 (nucleophile) is an active-site residue. DUMP contacts are provided by residues 176-179 (RSAD), asparagine 187, and 217-219 (HIY). Aspartate 179 is a binding site for (6R)-5,10-methylene-5,6,7,8-tetrahydrofolate. A (6R)-5,10-methylene-5,6,7,8-tetrahydrofolate-binding site is contributed by alanine 272.

This sequence belongs to the thymidylate synthase family. Bacterial-type ThyA subfamily. In terms of assembly, homodimer.

The protein resides in the cytoplasm. The catalysed reaction is dUMP + (6R)-5,10-methylene-5,6,7,8-tetrahydrofolate = 7,8-dihydrofolate + dTMP. It functions in the pathway pyrimidine metabolism; dTTP biosynthesis. Functionally, catalyzes the reductive methylation of 2'-deoxyuridine-5'-monophosphate (dUMP) to 2'-deoxythymidine-5'-monophosphate (dTMP) while utilizing 5,10-methylenetetrahydrofolate (mTHF) as the methyl donor and reductant in the reaction, yielding dihydrofolate (DHF) as a by-product. This enzymatic reaction provides an intracellular de novo source of dTMP, an essential precursor for DNA biosynthesis. This Corynebacterium jeikeium (strain K411) protein is Thymidylate synthase.